We begin with the raw amino-acid sequence, 644 residues long: Fidgetin-like protein 2 (644 aa).

Disordered stretches follow at residues 1–36 and 285–323; these read MHWT…ELPP and AADG…GGGG. A compositionally biased stretch (polar residues) spans 10 to 27; sequence PLNQWPEQHLDVSSTTPS. The segment covering 285-294 has biased composition (low complexity); that stretch reads AADGASYPAA. ATP-binding positions include Ala390 and 430 to 435; that span reads GCGKAL.

Belongs to the AAA ATPase family. Requires Mg(2+) as cofactor.

It is found in the cytoplasm. It localises to the cell cortex. The enzyme catalyses ATP + H2O = ADP + phosphate + H(+). Functionally, microtubule-severing enzyme that negatively regulates cell migration and wound healing. In migrating cells, targets dynamic microtubules (MTs) at the leading edge and severs them, thereby suppressing motility. Microtubule severing releases ARHGEF2 which activates RHOA, which in turn regulates focal ahesion turnover via focal adhesion kinase, as opposed to F-actin polymerization, to suppress cell motility. Negative regulator of axon regeneration that suppresses axonal growth by selectively severing dynamic MTs in the distal axon shaft and growth cone. Contributes to proper cell branching during endothelial and neuronal development. The sequence is that of Fidgetin-like protein 2 (Fignl2) from Mus musculus (Mouse).